We begin with the raw amino-acid sequence, 199 residues long: Interleukin-11 (199 aa).

The signal sequence occupies residues 1–21 (MNCVCRLVLVVLSLWPDRVVA). The segment at 182 to 190 (HLTLDWAVR) is important for interaction with IL11RA and for the stimulation of cell proliferation.

Belongs to the IL-6 superfamily. Interacts with IL11RA to associate with IL6ST, giving rise to a multimeric signaling complex.

Its subcellular location is the secreted. Functionally, cytokine that stimulates the proliferation of hematopoietic stem cells and megakaryocyte progenitor cells and induces megakaryocyte maturation resulting in increased platelet production. Also promotes the proliferation of hepatocytes in response to liver damage. Binding to its receptor formed by IL6ST and IL11RA activates a signaling cascade that promotes cell proliferation. Signaling leads to the activation of intracellular protein kinases and the phosphorylation of STAT3. The interaction with the membrane-bound IL11RA and IL6ST stimulates 'classic signaling', whereas the binding of IL11 and soluble IL11RA to IL6ST stimulates 'trans-signaling'. The protein is Interleukin-11 of Rattus norvegicus (Rat).